The primary structure comprises 670 residues: Penicillin-binding protein activator LpoA (670 aa).

The first 26 residues, 1 to 26 (MLPSKVVHRKAVRTVPLLLAALIFAG), serve as a signal peptide directing secretion. The N-palmitoyl cysteine moiety is linked to residue Cys27. The S-diacylglycerol cysteine moiety is linked to residue Cys27.

It belongs to the LpoA family. In terms of assembly, interacts with PBP1a.

It is found in the cell outer membrane. In terms of biological role, regulator of peptidoglycan synthesis that is essential for the function of penicillin-binding protein 1A (PBP1a). The sequence is that of Penicillin-binding protein activator LpoA from Erwinia tasmaniensis (strain DSM 17950 / CFBP 7177 / CIP 109463 / NCPPB 4357 / Et1/99).